The following is a 409-amino-acid chain: Elongation factor Tu (409 aa).

In terms of domain architecture, tr-type G spans 10–214; it reads KPHANIGTIG…EVDAYIPTPE (205 aa). The interval 19–26 is G1; the sequence is GHVDHGKT. GTP is bound at residue 19–26; that stretch reads GHVDHGKT. T26 lines the Mg(2+) pocket. The tract at residues 60-64 is G2; it reads GITIN. A G3 region spans residues 81 to 84; it reads DCPG. GTP is bound by residues 81-85 and 136-139; these read DCPGH and NKED. Positions 136 to 139 are G4; sequence NKED. Positions 174 to 176 are G5; that stretch reads SAL.

Belongs to the TRAFAC class translation factor GTPase superfamily. Classic translation factor GTPase family. EF-Tu/EF-1A subfamily. Monomer.

The protein localises to the cytoplasm. It carries out the reaction GTP + H2O = GDP + phosphate + H(+). In terms of biological role, GTP hydrolase that promotes the GTP-dependent binding of aminoacyl-tRNA to the A-site of ribosomes during protein biosynthesis. The sequence is that of Elongation factor Tu from Synechococcus elongatus (strain ATCC 33912 / PCC 7942 / FACHB-805) (Anacystis nidulans R2).